The chain runs to 444 residues: Ribosomal protein uS12 methylthiotransferase RimO (444 aa).

The MTTase N-terminal domain occupies 4 to 120; that stretch reads KSAALVSLGC…LKSFIRDHEA (117 aa). [4Fe-4S] cluster-binding residues include cysteine 13, cysteine 49, cysteine 83, cysteine 157, cysteine 161, and cysteine 164. In terms of domain architecture, Radical SAM core spans 143 to 371; the sequence is VEGRSSAYVK…LELQRGISRR (229 aa). The region spanning 374 to 442 is the TRAM domain; sequence ESLVGRVLPV…DYDVEAELLS (69 aa).

This sequence belongs to the methylthiotransferase family. RimO subfamily. [4Fe-4S] cluster serves as cofactor.

The protein localises to the cytoplasm. The catalysed reaction is L-aspartate(89)-[ribosomal protein uS12]-hydrogen + (sulfur carrier)-SH + AH2 + 2 S-adenosyl-L-methionine = 3-methylsulfanyl-L-aspartate(89)-[ribosomal protein uS12]-hydrogen + (sulfur carrier)-H + 5'-deoxyadenosine + L-methionine + A + S-adenosyl-L-homocysteine + 2 H(+). Functionally, catalyzes the methylthiolation of an aspartic acid residue of ribosomal protein uS12. In Syntrophobacter fumaroxidans (strain DSM 10017 / MPOB), this protein is Ribosomal protein uS12 methylthiotransferase RimO.